The primary structure comprises 280 residues: Cell division protein SepF (280 aa).

The segment at 22–117 (DYVDDRAPRA…DDYPEDAYGE (96 aa)) is disordered. 2 stretches are compositionally biased toward basic and acidic residues: residues 25–36 (DDRAPRASERGG) and 53–83 (RYGEDRYSADRFGPERFGAERFGPDRFGADR).

It belongs to the SepF family. In terms of assembly, homodimer. Interacts with FtsZ.

It localises to the cytoplasm. In terms of biological role, cell division protein that is part of the divisome complex and is recruited early to the Z-ring. Probably stimulates Z-ring formation, perhaps through the cross-linking of FtsZ protofilaments. Its function overlaps with FtsA. This is Cell division protein SepF from Nocardia farcinica (strain IFM 10152).